The sequence spans 180 residues: Shikimate kinase (180 aa).

19 to 24 (GAGKTT) contacts ATP. T23 is a binding site for Mg(2+). Substrate is bound by residues D41, R65, and G87. R125 is an ATP binding site. R144 is a binding site for substrate.

It belongs to the shikimate kinase family. Monomer. Mg(2+) is required as a cofactor.

It localises to the cytoplasm. It catalyses the reaction shikimate + ATP = 3-phosphoshikimate + ADP + H(+). The protein operates within metabolic intermediate biosynthesis; chorismate biosynthesis; chorismate from D-erythrose 4-phosphate and phosphoenolpyruvate: step 5/7. In terms of biological role, catalyzes the specific phosphorylation of the 3-hydroxyl group of shikimic acid using ATP as a cosubstrate. This is Shikimate kinase from Acinetobacter baumannii (strain SDF).